The following is a 245-amino-acid chain: Dehydrogenase/reductase SDR family member 6 (245 aa).

NAD(+)-binding positions include Gln-16–Ile-18, Asp-37, and Asp-58. Arg-144 contacts substrate. Residue Tyr-147 is the Proton acceptor of the active site. NAD(+)-binding positions include Lys-151 and Val-180–Ser-184. Positions 188 and 205 each coordinate substrate.

Belongs to the short-chain dehydrogenases/reductases (SDR) family. As to quaternary structure, homotetramer. In terms of tissue distribution, detected in liver, spleen and macrophages. Widely expressed.

Its subcellular location is the cytoplasm. It carries out the reaction cis-4-hydroxy-L-proline + NAD(+) = 4-oxo-L-proline + NADH + H(+). It catalyses the reaction (R)-3-hydroxybutanoate + NAD(+) = acetoacetate + NADH + H(+). Its pathway is amino-acid metabolism. It functions in the pathway siderophore biosynthesis. Functionally, NAD(H)-dependent dehydrogenase/reductase with a preference for cyclic substrates. Catalyzes stereoselective conversion of 4-oxo-L-proline to cis-4-hydroxy-L-proline, likely a detoxification mechanism for ketoprolines. Mediates the formation of 2,5-dihydroxybenzoate (2,5-DHBA), a siderophore that chelates free cytoplasmic iron and associates with LCN2, thereby regulating iron transport and homeostasis while protecting cells against free radical-induced oxidative stress. The iron-siderophore complex is imported into mitochondria, providing an iron source for mitochondrial metabolic processes in particular heme synthesis. May act as a 3-hydroxybutyrate dehydrogenase. (Microbial infection) May play a role in susceptibility to bacterial infection by providing an assimilable source of iron that is exploited by pathogenic bacteria. Host iron-siderophore complexes can be used by bacteria to promote their own growth and pathogenicity. This chain is Dehydrogenase/reductase SDR family member 6, found in Mus musculus (Mouse).